A 405-amino-acid polypeptide reads, in one-letter code: Tryptophan synthase beta chain (405 aa).

Lysine 98 is modified (N6-(pyridoxal phosphate)lysine).

The protein belongs to the TrpB family. In terms of assembly, tetramer of two alpha and two beta chains. Requires pyridoxal 5'-phosphate as cofactor.

It catalyses the reaction (1S,2R)-1-C-(indol-3-yl)glycerol 3-phosphate + L-serine = D-glyceraldehyde 3-phosphate + L-tryptophan + H2O. Its pathway is amino-acid biosynthesis; L-tryptophan biosynthesis; L-tryptophan from chorismate: step 5/5. The beta subunit is responsible for the synthesis of L-tryptophan from indole and L-serine. This is Tryptophan synthase beta chain from Stenotrophomonas maltophilia (strain K279a).